The chain runs to 359 residues: Quinolinate synthase (359 aa).

The iminosuccinate site is built by histidine 81 and serine 99. Cysteine 144 is a binding site for [4Fe-4S] cluster. Iminosuccinate-binding positions include tyrosine 170–asparagine 172 and serine 187. Cysteine 229 is a [4Fe-4S] cluster binding site. Iminosuccinate is bound by residues histidine 255–glutamate 257 and threonine 272. Cysteine 315 is a binding site for [4Fe-4S] cluster.

It belongs to the quinolinate synthase family. Type 2 subfamily. It depends on [4Fe-4S] cluster as a cofactor.

It localises to the cytoplasm. It carries out the reaction iminosuccinate + dihydroxyacetone phosphate = quinolinate + phosphate + 2 H2O + H(+). Its pathway is cofactor biosynthesis; NAD(+) biosynthesis; quinolinate from iminoaspartate: step 1/1. Functionally, catalyzes the condensation of iminoaspartate with dihydroxyacetone phosphate to form quinolinate. This chain is Quinolinate synthase, found in Sinorhizobium medicae (strain WSM419) (Ensifer medicae).